A 149-amino-acid chain; its full sequence is Transcriptional regulator MraZ (149 aa).

SpoVT-AbrB domains are found at residues 7-54 (KYVN…GISH) and 83-126 (AVQL…QPQN).

The protein belongs to the MraZ family. In terms of assembly, forms oligomers.

It localises to the cytoplasm. The protein localises to the nucleoid. The chain is Transcriptional regulator MraZ from Rickettsia akari (strain Hartford).